Reading from the N-terminus, the 156-residue chain is Small ribosomal subunit protein uS7 (156 aa).

Belongs to the universal ribosomal protein uS7 family. In terms of assembly, part of the 30S ribosomal subunit. Contacts proteins S9 and S11.

Its function is as follows. One of the primary rRNA binding proteins, it binds directly to 16S rRNA where it nucleates assembly of the head domain of the 30S subunit. Is located at the subunit interface close to the decoding center, probably blocks exit of the E-site tRNA. This is Small ribosomal subunit protein uS7 from Novosphingobium aromaticivorans (strain ATCC 700278 / DSM 12444 / CCUG 56034 / CIP 105152 / NBRC 16084 / F199).